We begin with the raw amino-acid sequence, 146 residues long: UPF0178 protein BcerKBAB4_2842 (146 aa).

It belongs to the UPF0178 family.

The chain is UPF0178 protein BcerKBAB4_2842 from Bacillus mycoides (strain KBAB4) (Bacillus weihenstephanensis).